A 198-amino-acid polypeptide reads, in one-letter code: Nudix hydrolase 21, chloroplastic (198 aa).

A chloroplast-targeting transit peptide spans 1–37; sequence MISLFISNFSNLSNLSPTFDNMNMNIPSKKIVPVPTP. One can recognise a Nudix hydrolase domain in the interval 59 to 191; sequence GYRQVVGCVP…WMREALEAFI (133 aa). A Nudix box motif is present at residues 98–119; that stretch reads GGWEIDESIEEAALRETIEEAG. Mg(2+) contacts are provided by glutamate 113 and glutamate 117.

The protein belongs to the Nudix hydrolase family. The cofactor is Mg(2+). Requires Mn(2+) as cofactor. Expressed in roots, leaves, stems and inflorescences.

It localises to the plastid. The protein resides in the chloroplast. In terms of biological role, probably mediates the hydrolysis of some nucleoside diphosphate derivatives. The chain is Nudix hydrolase 21, chloroplastic (NUDT21) from Arabidopsis thaliana (Mouse-ear cress).